A 46-amino-acid polypeptide reads, in one-letter code: Iota-conotoxin-like R11.7 (46 aa).

2 positions are modified to 4-hydroxyproline: Pro2 and Pro11. 4 cysteine pairs are disulfide-bonded: Cys5-Cys19, Cys12-Cys22, Cys18-Cys27, and Cys21-Cys38. Pro29 bears the 4-hydroxyproline mark. Residue Phe44 is modified to D-phenylalanine.

This sequence belongs to the conotoxin I1 superfamily. As to expression, expressed by the venom duct.

The protein localises to the secreted. Functionally, iota-conotoxins bind to voltage-gated sodium channels (Nav) and act as agonists by shifting the voltage-dependence of activation to more hyperpolarized levels. Produces general excitatory symptoms. The sequence is that of Iota-conotoxin-like R11.7 from Conus radiatus (Rayed cone).